A 213-amino-acid polypeptide reads, in one-letter code: tRNA (guanine-N(7)-)-methyltransferase (213 aa).

Residues Glu44, Glu69, Asn96, and Asp118 each contribute to the S-adenosyl-L-methionine site. Asp118 is a catalytic residue. Lys122 contributes to the substrate binding site. The tract at residues 124 to 129 (RHEKRR) is interaction with RNA. Substrate contacts are provided by residues Asp154 and 192–195 (TEYE).

Belongs to the class I-like SAM-binding methyltransferase superfamily. TrmB family.

It carries out the reaction guanosine(46) in tRNA + S-adenosyl-L-methionine = N(7)-methylguanosine(46) in tRNA + S-adenosyl-L-homocysteine. It participates in tRNA modification; N(7)-methylguanine-tRNA biosynthesis. Catalyzes the formation of N(7)-methylguanine at position 46 (m7G46) in tRNA. This is tRNA (guanine-N(7)-)-methyltransferase from Latilactobacillus sakei subsp. sakei (strain 23K) (Lactobacillus sakei subsp. sakei).